The following is a 575-amino-acid chain: Urease subunit alpha (575 aa).

The Urease domain occupies 137–575 (GGIDCHIHFI…LPMTQRYFLF (439 aa)). Ni(2+) is bound by residues histidine 142, histidine 144, and lysine 225. Residue lysine 225 is modified to N6-carboxylysine. Position 227 (histidine 227) interacts with substrate. Ni(2+) is bound by residues histidine 254 and histidine 280. Catalysis depends on histidine 328, which acts as the Proton donor. Aspartate 368 serves as a coordination point for Ni(2+).

This sequence belongs to the metallo-dependent hydrolases superfamily. Urease alpha subunit family. In terms of assembly, heterotrimer of UreA (gamma), UreB (beta) and UreC (alpha) subunits. Three heterotrimers associate to form the active enzyme. Ni cation is required as a cofactor. In terms of processing, carboxylation allows a single lysine to coordinate two nickel ions.

Its subcellular location is the cytoplasm. The enzyme catalyses urea + 2 H2O + H(+) = hydrogencarbonate + 2 NH4(+). It functions in the pathway nitrogen metabolism; urea degradation; CO(2) and NH(3) from urea (urease route): step 1/1. The sequence is that of Urease subunit alpha from Methylibium petroleiphilum (strain ATCC BAA-1232 / LMG 22953 / PM1).